Here is a 718-residue protein sequence, read N- to C-terminus: MFQMAKRAFLSTTLTLGLLAGSALPFLPASAAYADPDIAVTNKQSFSTDVIYQVFTDRFLDGNPSNNPTGAAYDATCSNLKLYCGGDWQGLINKINDNYFSDLGVTALWISQPVENIFATINYSGVTNTAYHGYWARDFKKTNPYFGTMADFQNLITTAHAKGIKIIIDFAPNHTSPAMETDTSFAENGKLYDNGTLVGGYTNDTNGYFHHNGGSDFSSLENGIYKNLYDLADFNHNNATIDKYFKDAIKLWLDMGVDGIRVDAVKHIALGWQKSWMSSIYVHKPVFTFGEWFLGSAASDADNTDFANKSGMSLLDFRFNSAVRNVFRDNTSNMYALDSMINSTATDYNQVNDQVTFIDNHDMDRFKTSAVNNRRLEQALAFTLTSRGVPAIYYGTEQYLTGNGDPDNRAKMPSFSKSTTAFNVISKLAPLRKSNPAIAYGSTQQRWINNDVYVYERKFGKSVAVVAVNRNLSTPANITGLSTSLPTGSYTDVLGGVLNGNNITSSNGSVNSFTLAAGATAVWQYTAAETTPTIGHVGPVMGKPGNVVTIDGRGFGSTKGTVYFGTTAVTGAAITSWEDTQIKVTIPSVAAGNYAVKVAANGVNSNAYNHFTILTGDQVTVRFVINNASTTLGQNIYLTGNVAELGNWSTGSTAIGPAFNQVIHQYPTWYYDVSVPAGKELEFKFFKKNGSTITWEGGSNHKFTTPASGTATVTVNWQ.

The first 34 residues, 1–34 (MFQMAKRAFLSTTLTLGLLAGSALPFLPASAAYA), serve as a signal peptide directing secretion. Positions 35–172 (DPDIAVTNKQ…GIKIIIDFAP (138 aa)) are A1. Positions 61, 63, 66, and 67 each coordinate Ca(2+). Cys77 and Cys84 are disulfide-bonded. The Ca(2+) site is built by Gly85 and Asp87. A substrate-binding site is contributed by 134 to 135 (YW). Position 173 (Asn173) interacts with Ca(2+). The tract at residues 173–236 (NHTSPAMETD…NLYDLADFNH (64 aa)) is b. Residue His174 participates in substrate binding. Ile224 contacts Ca(2+). 227–230 (NLYD) lines the substrate pocket. Asp233 contacts Ca(2+). The A2 stretch occupies residues 237–440 (NNATIDKYFK…LRKSNPAIAY (204 aa)). Residue Arg261 participates in substrate binding. Asp263 functions as the Nucleophile in the catalytic mechanism. Residue 266–267 (KH) participates in substrate binding. His267 provides a ligand contact to Ca(2+). Residue Glu291 is the Proton donor of the active site. Substrate contacts are provided by His361, Asp405, and Arg409. The c stretch occupies residues 441 to 528 (GSTQQRWINN…ATAVWQYTAA (88 aa)). Positions 529-614 (ETTPTIGHVG…SNAYNHFTIL (86 aa)) are d. One can recognise an IPT/TIG domain in the interval 532 to 612 (PTIGHVGPVM…VNSNAYNHFT (81 aa)). The CBM20 domain occupies 613 to 718 (ILTGDQVTVR…GTATVTVNWQ (106 aa)). The e stretch occupies residues 615-718 (TGDQVTVRFV…GTATVTVNWQ (104 aa)).

It belongs to the glycosyl hydrolase 13 family. As to quaternary structure, monomer. The cofactor is Ca(2+).

The protein localises to the secreted. The catalysed reaction is Cyclizes part of a (1-&gt;4)-alpha-D-glucan chain by formation of a (1-&gt;4)-alpha-D-glucosidic bond.. The protein is Cyclomaltodextrin glucanotransferase (cgt) of Bacillus sp. (strain 6.6.3).